The chain runs to 122 residues: Large ribosomal subunit protein uL14 (122 aa).

This sequence belongs to the universal ribosomal protein uL14 family. Part of the 50S ribosomal subunit. Forms a cluster with proteins L3 and L19. In the 70S ribosome, L14 and L19 interact and together make contacts with the 16S rRNA in bridges B5 and B8.

In terms of biological role, binds to 23S rRNA. Forms part of two intersubunit bridges in the 70S ribosome. The protein is Large ribosomal subunit protein uL14 of Nocardioides sp. (strain ATCC BAA-499 / JS614).